Here is a 162-residue protein sequence, read N- to C-terminus: Photosystem II extrinsic protein V (162 aa).

A signal peptide spans 1–25; the sequence is MFKKFSALFTLLFTLCLVNPMLVYS. Heme c-binding residues include Cys62, Cys65, His66, and His117.

The protein belongs to the cytochrome c family. PsbV subfamily. In terms of assembly, PSII is composed of 1 copy each of membrane proteins PsbA, PsbB, PsbC, PsbD, PsbE, PsbF, PsbH, PsbI, PsbJ, PsbK, PsbL, PsbM, PsbT, PsbX, PsbY, PsbZ, Psb30/Ycf12, at least 3 peripheral proteins of the oxygen-evolving complex and a large number of cofactors. It forms dimeric complexes. The cofactor is heme c.

The protein resides in the plastid. It is found in the chloroplast thylakoid membrane. In terms of biological role, one of the extrinsic, lumenal subunits of photosystem II (PSII). PSII is a light-driven water plastoquinone oxidoreductase, using light energy to abstract electrons from H(2)O, generating a proton gradient subsequently used for ATP formation. The extrinsic proteins stabilize the structure of photosystem II oxygen-evolving complex (OEC), the ion environment of oxygen evolution and protect the OEC against heat-induced inactivation. This is Photosystem II extrinsic protein V from Guillardia theta (Cryptophyte).